The sequence spans 375 residues: Dual-specificity RNA methyltransferase RlmN (375 aa).

Residue Glu-98 is the Proton acceptor of the active site. Residues 106 to 346 (GGKRRTLCVS…VRTTRGDDID (241 aa)) enclose the Radical SAM core domain. Cysteines 113 and 349 form a disulfide. Cys-120, Cys-124, and Cys-127 together coordinate [4Fe-4S] cluster. Residues 174-175 (GE), Ser-206, 228-230 (SLH), and Asn-306 each bind S-adenosyl-L-methionine. Catalysis depends on Cys-349, which acts as the S-methylcysteine intermediate.

It belongs to the radical SAM superfamily. RlmN family. Requires [4Fe-4S] cluster as cofactor.

The protein localises to the cytoplasm. It carries out the reaction adenosine(2503) in 23S rRNA + 2 reduced [2Fe-2S]-[ferredoxin] + 2 S-adenosyl-L-methionine = 2-methyladenosine(2503) in 23S rRNA + 5'-deoxyadenosine + L-methionine + 2 oxidized [2Fe-2S]-[ferredoxin] + S-adenosyl-L-homocysteine. It catalyses the reaction adenosine(37) in tRNA + 2 reduced [2Fe-2S]-[ferredoxin] + 2 S-adenosyl-L-methionine = 2-methyladenosine(37) in tRNA + 5'-deoxyadenosine + L-methionine + 2 oxidized [2Fe-2S]-[ferredoxin] + S-adenosyl-L-homocysteine. Its function is as follows. Specifically methylates position 2 of adenine 2503 in 23S rRNA and position 2 of adenine 37 in tRNAs. m2A2503 modification seems to play a crucial role in the proofreading step occurring at the peptidyl transferase center and thus would serve to optimize ribosomal fidelity. This is Dual-specificity RNA methyltransferase RlmN from Chromohalobacter salexigens (strain ATCC BAA-138 / DSM 3043 / CIP 106854 / NCIMB 13768 / 1H11).